Here is a 255-residue protein sequence, read N- to C-terminus: tRNA (guanine-N(1)-)-methyltransferase (255 aa).

Residues glycine 113 and 133–138 (VGDFVL) contribute to the S-adenosyl-L-methionine site.

The protein belongs to the RNA methyltransferase TrmD family. In terms of assembly, homodimer.

It localises to the cytoplasm. It catalyses the reaction guanosine(37) in tRNA + S-adenosyl-L-methionine = N(1)-methylguanosine(37) in tRNA + S-adenosyl-L-homocysteine + H(+). In terms of biological role, specifically methylates guanosine-37 in various tRNAs. This Francisella philomiragia subsp. philomiragia (strain ATCC 25017 / CCUG 19701 / FSC 153 / O#319-036) protein is tRNA (guanine-N(1)-)-methyltransferase.